A 270-amino-acid polypeptide reads, in one-letter code: Chymotrypsin-like elastase family member 3B (270 aa).

A signal peptide (or 16) is located at residues 1–15 (MMLRLLSSLLLVAVA). A propeptide spans 16-28 (SGYGPPSSRPSSR) (activation peptide). Residues 29 to 268 (VVNGEDAVPY…FIDWIEETIA (240 aa)) enclose the Peptidase S1 domain. A disulfide bridge links Cys58 with Cys74. The active-site Charge relay system is His73. Residue Asn114 is glycosylated (N-linked (GlcNAc...) asparagine). An intrachain disulfide couples Cys117 to Cys120. The Charge relay system role is filled by Asp123. Intrachain disulfides connect Cys157/Cys223, Cys188/Cys204, and Cys213/Cys244. Ser217 acts as the Charge relay system in catalysis.

It belongs to the peptidase S1 family. Elastase subfamily. In terms of tissue distribution, pancreas. Not detectable in keratinocytes.

It catalyses the reaction Preferential cleavage: Ala-|-Xaa. Does not hydrolyze elastin.. Its function is as follows. Efficient protease with alanine specificity but only little elastolytic activity. This chain is Chymotrypsin-like elastase family member 3B (CELA3B), found in Homo sapiens (Human).